The sequence spans 105 residues: Phosphoribosyl-ATP pyrophosphatase (105 aa).

It belongs to the PRA-PH family.

It is found in the cytoplasm. The enzyme catalyses 1-(5-phospho-beta-D-ribosyl)-ATP + H2O = 1-(5-phospho-beta-D-ribosyl)-5'-AMP + diphosphate + H(+). Its pathway is amino-acid biosynthesis; L-histidine biosynthesis; L-histidine from 5-phospho-alpha-D-ribose 1-diphosphate: step 2/9. The chain is Phosphoribosyl-ATP pyrophosphatase from Ruthia magnifica subsp. Calyptogena magnifica.